A 393-amino-acid polypeptide reads, in one-letter code: NAD(P)H-quinone oxidoreductase subunit H, chloroplastic (393 aa).

The protein belongs to the complex I 49 kDa subunit family. In terms of assembly, NDH is composed of at least 16 different subunits, 5 of which are encoded in the nucleus.

The protein localises to the plastid. It is found in the chloroplast thylakoid membrane. The catalysed reaction is a plastoquinone + NADH + (n+1) H(+)(in) = a plastoquinol + NAD(+) + n H(+)(out). The enzyme catalyses a plastoquinone + NADPH + (n+1) H(+)(in) = a plastoquinol + NADP(+) + n H(+)(out). In terms of biological role, NDH shuttles electrons from NAD(P)H:plastoquinone, via FMN and iron-sulfur (Fe-S) centers, to quinones in the photosynthetic chain and possibly in a chloroplast respiratory chain. The immediate electron acceptor for the enzyme in this species is believed to be plastoquinone. Couples the redox reaction to proton translocation, and thus conserves the redox energy in a proton gradient. The polypeptide is NAD(P)H-quinone oxidoreductase subunit H, chloroplastic (Lotus japonicus (Lotus corniculatus var. japonicus)).